A 285-amino-acid chain; its full sequence is Putative ABC transporter ATP-binding protein CPE0195 (285 aa).

Residues 6 to 242 enclose the ABC transporter domain; that stretch reads LKVEELNYNY…KEVIRKVNLR (237 aa). 39-46 serves as a coordination point for ATP; that stretch reads GGNGVGKS.

This sequence belongs to the ABC transporter superfamily.

Its subcellular location is the cell membrane. Probably part of an ABC transporter complex. Responsible for energy coupling to the transport system. In Clostridium perfringens (strain 13 / Type A), this protein is Putative ABC transporter ATP-binding protein CPE0195.